The following is a 71-amino-acid chain: Heat-stable enterotoxin B (71 aa).

The N-terminal stretch at 1 to 19 (MKKIILALVLMLFSFCTLG) is a signal peptide. The propeptide occupies 20–52 (QETASMHLDDTLSAPIAAEINRKACDTQTPSPS). Cystine bridges form between Cys-59–Cys-64, Cys-60–Cys-68, and Cys-63–Cys-71.

It belongs to the heat-stable enterotoxin family.

Its subcellular location is the secreted. In terms of biological role, toxin which activates the particulate form of guanylate cyclase and increases cyclic GMP levels within the host intestinal epithelial cells. Could play an important role in pathogenesis. This is Heat-stable enterotoxin B (ystB) from Yersinia enterocolitica.